Here is a 966-residue protein sequence, read N- to C-terminus: MTTETLTQLEQHELFIRRHIGPESTQQQEMLNFVGAESLEDLTQQIVPGSIRLNRDLAVGSSCSEAEGMAYIREVADKNKVFKSYIGMGYYGTEVPSVIQRNVFENPGWYTAYTPYQPEIAQGRLEAILNFQQVSMDLTGLDLASASLLDEATAAAEAMALAKRVSKAKKANIFFIADDVFPQTIDVVKTRAECFGFDIVVGPASDAVNYELFGALFQYTNRFGEISDHTALFAELKAKKAVVTVAADMMSLVLLKSPGSMGADVVFGSAQRFGVPMGFGGPHAAFFVTRDEYKRSLPGRIIGVSQDTRGNRALRMAMQTREQHIRREKANSNICTAQVLLANMASFYAVYHGPQGLKVIAERIHRLTDILAAGLTAKGLELVNSTWFDTITVKGGDVAAINARALAAQINLRIDSANDNAGSFGISLDETTTRTDVSELFDVILGSEHGLDVAALDEQIIKADSASIPSELVRTDAILTHPTFNRYHSETEMMRYIKRLENKDLALNHSMISLGSCTMKLNAATEMMPVSWAEFGNMHPFCPLDQAEGYTQLIEELSAWLVDITGYDAMCMQANSGASGEYAGLLAIRNYHISRGEGHRNVCLIPQSAHGTNPASAQLAGMKIVVTACDKAGNVDMEDLKTKAAEVADNLSCIMITYPSTHGVYEETVSEICDIIHQHGGQVYLDGANMNAQVGLTTPGSIGADVSHLNLHKTFAIPHGGGGPGMGPIGVKAHLAPFVAGHSVVKPGRESDNNGAVSAAPYGSASILPITWMYIKLLGYQGLRQSTQVALLNANYVMKKLSAHYPVLYTGRNDRVAHECIIDLRPLKEASGVTEMDIAKRLNDYGFHAPTMSFPVAGTLMIEPTESESKVELDRFIEAMVSIRAEIAKVESGEWPVDNNPLHNAPHTLADIMDPAFDERPYTRQEAVFPTAAVKANKFWPTVNRIDDVYGDRNLMCSCAPVSDYE.

The residue at position 713 (lysine 713) is an N6-(pyridoxal phosphate)lysine.

It belongs to the GcvP family. In terms of assembly, the glycine cleavage system is composed of four proteins: P, T, L and H. It depends on pyridoxal 5'-phosphate as a cofactor.

The enzyme catalyses N(6)-[(R)-lipoyl]-L-lysyl-[glycine-cleavage complex H protein] + glycine + H(+) = N(6)-[(R)-S(8)-aminomethyldihydrolipoyl]-L-lysyl-[glycine-cleavage complex H protein] + CO2. Functionally, the glycine cleavage system catalyzes the degradation of glycine. The P protein binds the alpha-amino group of glycine through its pyridoxal phosphate cofactor; CO(2) is released and the remaining methylamine moiety is then transferred to the lipoamide cofactor of the H protein. In Shewanella halifaxensis (strain HAW-EB4), this protein is Glycine dehydrogenase (decarboxylating).